Consider the following 67-residue polypeptide: Prokaryotic ubiquitin-like protein Pup (67 aa).

The span at 1-36 (MPQQFEQPQAQQAVTQEDDALATTQAATQTESTDQA) shows a compositional bias: low complexity. The disordered stretch occupies residues 1-38 (MPQQFEQPQAQQAVTQEDDALATTQAATQTESTDQADV). The ARC ATPase binding stretch occupies residues 23–61 (TTQAATQTESTDQADVLDDILDDIESTLETNAEEYVNSF). Glutamate 67 is covalently cross-linked (Isoglutamyl lysine isopeptide (Glu-Lys) (interchain with K-? in acceptor proteins)).

This sequence belongs to the prokaryotic ubiquitin-like protein family. In terms of assembly, strongly interacts with the proteasome-associated ATPase ARC through a hydrophobic interface; the interacting region of Pup lies in its C-terminal half. There is one Pup binding site per ARC hexamer ring.

It participates in protein degradation; proteasomal Pup-dependent pathway. Functionally, protein modifier that is covalently attached to lysine residues of substrate proteins, thereby targeting them for proteasomal degradation. The tagging system is termed pupylation. The polypeptide is Prokaryotic ubiquitin-like protein Pup (Bifidobacterium longum subsp. infantis (strain ATCC 15697 / DSM 20088 / JCM 1222 / NCTC 11817 / S12)).